The following is a 310-amino-acid chain: Alpha/beta hydrolase domain-containing protein 17A (310 aa).

Active-site charge relay system residues include Ser190, Asp255, and His284. Residue Ser307 is modified to Phosphoserine.

This sequence belongs to the AB hydrolase superfamily. ABHD17 family. Palmitoylated on cysteine residues located in a cysteine cluster at the N-terminus which promotes membrane localization. Palmitoylation is required for post-synaptic localization and for depalmitoylating activity towards DLG4/PSD95.

It is found in the cell membrane. It localises to the endosome membrane. The protein localises to the cell projection. The protein resides in the dendritic spine. Its subcellular location is the postsynaptic density membrane. It catalyses the reaction S-hexadecanoyl-L-cysteinyl-[protein] + H2O = L-cysteinyl-[protein] + hexadecanoate + H(+). Inhibited by palmostatin-B. Functionally, hydrolyzes fatty acids from S-acylated cysteine residues in proteins. Has depalmitoylating activity towards NRAS. Has depalmitoylating activity towards DLG4/PSD95. May have depalmitoylating activity towards MAP6. In Homo sapiens (Human), this protein is Alpha/beta hydrolase domain-containing protein 17A.